Reading from the N-terminus, the 151-residue chain is MMALLHKEKLIECIENEVLSGGTVLLLVKNIVVSEISYIDNSYKYFTFNANHDLKSKEDLKGATSNNIAKMIYNWIIKNPQNNKIWSGEPRTQIYFENDLYHTNYNHECIKDFWDVSTSVGPCIFNDRSIWCTKCTSFYPFTNIMSPNIFQ.

Zn(2+)-binding residues include His102, Cys109, Cys132, and Cys135. The Thioredoxin WCTKC motif signature appears at 131 to 135 (WCTKC).

It belongs to the asfivirus A151R family. In terms of assembly, monomer. Homodimer. Interacts with protein B119L. Interacts with membrane protein E248R. Zn(2+) serves as cofactor.

May participate in a redox cascade for the formation of disulfide bonds in viral proteins. This African swine fever virus (strain Badajoz 1971 Vero-adapted) (Ba71V) protein is Protein A151R.